A 479-amino-acid chain; its full sequence is Sulfate adenylyltransferase subunit 1 (479 aa).

Residues 25–239 enclose the tr-type G domain; sequence KSLLRFLTCG…EVLETVDIQR (215 aa). Residues 34–41 form a G1 region; that stretch reads GSVDDGKS. 34–41 contacts GTP; the sequence is GSVDDGKS. A G2 region spans residues 92-96; the sequence is GITID. The segment at 113–116 is G3; that stretch reads DTPG. GTP contacts are provided by residues 113-117 and 168-171; these read DTPGH and NKMD. A G4 region spans residues 168-171; it reads NKMD. The interval 206–208 is G5; sequence SAL.

The protein belongs to the TRAFAC class translation factor GTPase superfamily. Classic translation factor GTPase family. CysN/NodQ subfamily. As to quaternary structure, heterodimer composed of CysD, the smaller subunit, and CysN.

The enzyme catalyses sulfate + ATP + H(+) = adenosine 5'-phosphosulfate + diphosphate. It participates in sulfur metabolism; hydrogen sulfide biosynthesis; sulfite from sulfate: step 1/3. Functionally, with CysD forms the ATP sulfurylase (ATPS) that catalyzes the adenylation of sulfate producing adenosine 5'-phosphosulfate (APS) and diphosphate, the first enzymatic step in sulfur assimilation pathway. APS synthesis involves the formation of a high-energy phosphoric-sulfuric acid anhydride bond driven by GTP hydrolysis by CysN coupled to ATP hydrolysis by CysD. The sequence is that of Sulfate adenylyltransferase subunit 1 from Salmonella newport (strain SL254).